We begin with the raw amino-acid sequence, 94 residues long: MSSRLAVFAYDIRDDRVRRHALKTLREWRLDGQLSVHECQVDAIQARRLFEQLGDELDPATDAWLFTWVEGHRAVLARGKGRTTALQDGLLLAA.

Asp11 contributes to the Mg(2+) binding site.

The protein belongs to the CRISPR-associated endoribonuclease Cas2 protein family. Homodimer, forms a heterotetramer with a Cas1 homodimer. Mg(2+) serves as cofactor.

Its function is as follows. CRISPR (clustered regularly interspaced short palindromic repeat), is an adaptive immune system that provides protection against mobile genetic elements (viruses, transposable elements and conjugative plasmids). CRISPR clusters contain sequences complementary to antecedent mobile elements and target invading nucleic acids. CRISPR clusters are transcribed and processed into CRISPR RNA (crRNA). Functions as a ssRNA-specific endoribonuclease. Involved in the integration of spacer DNA into the CRISPR cassette. The sequence is that of CRISPR-associated endoribonuclease Cas2 from Allochromatium vinosum (strain ATCC 17899 / DSM 180 / NBRC 103801 / NCIMB 10441 / D) (Chromatium vinosum).